Reading from the N-terminus, the 1498-residue chain is Rap guanine nucleotide exchange factor 2 (1498 aa).

2 disordered regions span residues 40 to 59 and 68 to 101; these read HVSSSHSGCSITSDSGSSSL and SEAGDMDLSGLPETAVDSEDDDDEEDIERASDPL. A compositionally biased stretch (acidic residues) spans 83–94; that stretch reads VDSEDDDDEEDI. Position 135–252 (135–252) interacts with a nucleoside 3',5'-cyclic phosphate; it reads AFANMTMSVR…QKVEEEGEIV (118 aa). Residues 267 to 380 enclose the N-terminal Ras-GEF domain; sequence KGHIVIKGTS…RLLNIACAAK (114 aa). A PDZ domain is found at 385–468; the sequence is LMTLTKPSRE…LSITVKTNLF (84 aa). Ser501 carries the post-translational modification Phosphoserine. Residues 606–692 enclose the Ras-associating domain; that stretch reads PDQVLRVFKA…GRYYLKNNME (87 aa). A Phosphothreonine modification is found at Thr644. One can recognise a Ras-GEF domain in the interval 717–944; the sequence is STVEVATQLS…SQGSTNATVL (228 aa). Phosphoserine occurs at positions 806, 930, 933, 1022, 1079, 1088, 1094, 1115, 1119, 1158, and 1175. A disordered region spans residues 1002–1048; sequence PATNTLPKNPGDKKPVKSETSPVAPRAGSQQKAQAQPPPPQPQPQHK. The interval 1094–1159 is disordered; it reads SLERHKKQAE…RSSIVSNSSF (66 aa). 2 stretches are compositionally biased toward low complexity: residues 1110–1124 and 1140–1159; these read SSQLSSPPTSPQSSP and SDSGHSEISSRSSIVSNSSF. Disordered regions lie at residues 1224-1257, 1304-1371, and 1392-1498; these read STEELSQDQGDRASLDAADSGRGSWTSCSSGSHD, TKYN…TKPV, and EGRY…VSAV. Composition is skewed to polar residues over residues 1246–1257 and 1306–1330; these read GSWTSCSSGSHD and YNRQNQSRESLEQAQSRASWASSTG. Over residues 1354-1365 the composition is skewed to low complexity; the sequence is EAESSSVTSVTT. Over residues 1487–1498 the composition is skewed to acidic residues; that stretch reads TEEDEDEQVSAV.

It belongs to the RAPGEF2 family. In terms of assembly, found in a complex, at least composed of KIDINS220, MAGI2, NTRK1 and RAPGEF2; the complex is mainly formed at late endosomes in a neuronal growth factor (NGF)-dependent manner. Interacts (via C-terminal domain) with NEDD4 (via WW domains); this interaction leads to ubiquitination and degradation via the proteasome pathway in a cAMP-independent manner. Interacts with MAGI1 (via PDZ domain). Interacts with ADRB1 (via C-terminal PDZ motif); the interaction is direct. Interacts (via Ras-associating domain) with RAP1A (via GTP-bound active form). Interacts weakly with HRAS (via GDP- and GTP-bound forms). Interacts (via C-terminal domain) with MAGI2 (via PDZ and WW domains). Interacts with CDH1, CTNNB1 and TJP1. Ubiquitinated by NEDD4, leading to proteasomal degradation. In terms of processing, phosphorylation by PLK2 promotes its activity.

The protein resides in the cell junction. It localises to the cytoplasm. It is found in the perinuclear region. Its subcellular location is the cell membrane. The protein localises to the late endosome. Functions as a guanine nucleotide exchange factor (GEF), which activates Rap and Ras family of small GTPases by exchanging bound GDP for free GTP in a cAMP-dependent manner. Serves as a link between cell surface receptors and Rap/Ras GTPases in intracellular signaling cascades. Also acts as an effector for Rap1 by direct association with Rap1-GTP thereby leading to the amplification of Rap1-mediated signaling. Shows weak activity on HRAS. It is controversial whether RAPGEF2 binds cAMP and cGMP or not. Its binding to ligand-activated beta-1 adrenergic receptor ADRB1 leads to the Ras activation through the G(s)-alpha signaling pathway. Involved in the cAMP-induced Ras and Erk1/2 signaling pathway that leads to sustained inhibition of long term melanogenesis by reducing dendrite extension and melanin synthesis. Also provides inhibitory signals for cell proliferation of melanoma cells and promotes their apoptosis in a cAMP-independent nanner. Regulates cAMP-induced neuritogenesis by mediating the Rap1/B-Raf/ERK signaling through a pathway that is independent on both PKA and RAPGEF3/RAPGEF4. Involved in neuron migration and in the formation of the major forebrain fiber connections forming the corpus callosum, the anterior commissure and the hippocampal commissure during brain development. Involved in neuronal growth factor (NGF)-induced sustained activation of Rap1 at late endosomes and in brain-derived neurotrophic factor (BDNF)-induced axon outgrowth of hippocampal neurons. Plays a role in the regulation of embryonic blood vessel formation and in the establishment of basal junction integrity and endothelial barrier function. May be involved in the regulation of the vascular endothelial growth factor receptor KDR and cadherin CDH5 expression at allantois endothelial cell-cell junctions. The polypeptide is Rap guanine nucleotide exchange factor 2 (RAPGEF2) (Canis lupus familiaris (Dog)).